We begin with the raw amino-acid sequence, 676 residues long: UvrABC system protein C (676 aa).

One can recognise a GIY-YIG domain in the interval 16–95 (VEPGVYRFRD…IKEFDPRFNI (80 aa)). The region spanning 208 to 243 (DRLVRDLERKMTAAAEDLDFERAARLRDDIGALRRA) is the UVR domain.

It belongs to the UvrC family. In terms of assembly, interacts with UvrB in an incision complex.

The protein localises to the cytoplasm. In terms of biological role, the UvrABC repair system catalyzes the recognition and processing of DNA lesions. UvrC both incises the 5' and 3' sides of the lesion. The N-terminal half is responsible for the 3' incision and the C-terminal half is responsible for the 5' incision. In Mycobacterium sp. (strain JLS), this protein is UvrABC system protein C.